Consider the following 307-residue polypeptide: Coenzyme PQQ synthesis protein B (307 aa).

Belongs to the PqqB family.

It participates in cofactor biosynthesis; pyrroloquinoline quinone biosynthesis. May be involved in the transport of PQQ or its precursor to the periplasm. This Gluconacetobacter diazotrophicus (strain ATCC 49037 / DSM 5601 / CCUG 37298 / CIP 103539 / LMG 7603 / PAl5) protein is Coenzyme PQQ synthesis protein B.